A 270-amino-acid chain; its full sequence is 4-hydroxy-tetrahydrodipicolinate reductase (270 aa).

NAD(+) contacts are provided by residues 9–14 and glutamate 35; that span reads GSGGRM. Residue arginine 36 participates in NADP(+) binding. NAD(+) is bound by residues 99-101 and 123-126; these read GTT and ASNY. Catalysis depends on histidine 156, which acts as the Proton donor/acceptor. Histidine 157 is a (S)-2,3,4,5-tetrahydrodipicolinate binding site. The active-site Proton donor is the lysine 160. (S)-2,3,4,5-tetrahydrodipicolinate is bound at residue 166 to 167; sequence GT.

The protein belongs to the DapB family.

It is found in the cytoplasm. The enzyme catalyses (S)-2,3,4,5-tetrahydrodipicolinate + NAD(+) + H2O = (2S,4S)-4-hydroxy-2,3,4,5-tetrahydrodipicolinate + NADH + H(+). It catalyses the reaction (S)-2,3,4,5-tetrahydrodipicolinate + NADP(+) + H2O = (2S,4S)-4-hydroxy-2,3,4,5-tetrahydrodipicolinate + NADPH + H(+). The protein operates within amino-acid biosynthesis; L-lysine biosynthesis via DAP pathway; (S)-tetrahydrodipicolinate from L-aspartate: step 4/4. Functionally, catalyzes the conversion of 4-hydroxy-tetrahydrodipicolinate (HTPA) to tetrahydrodipicolinate. The protein is 4-hydroxy-tetrahydrodipicolinate reductase of Histophilus somni (strain 2336) (Haemophilus somnus).